The primary structure comprises 508 residues: Bifunctional purine biosynthesis protein PurH (508 aa).

An MGS-like domain is found at 1–145 (MAKKALISVS…KNYKYVTILV (145 aa)).

It belongs to the PurH family.

The enzyme catalyses (6R)-10-formyltetrahydrofolate + 5-amino-1-(5-phospho-beta-D-ribosyl)imidazole-4-carboxamide = 5-formamido-1-(5-phospho-D-ribosyl)imidazole-4-carboxamide + (6S)-5,6,7,8-tetrahydrofolate. It catalyses the reaction IMP + H2O = 5-formamido-1-(5-phospho-D-ribosyl)imidazole-4-carboxamide. Its pathway is purine metabolism; IMP biosynthesis via de novo pathway; 5-formamido-1-(5-phospho-D-ribosyl)imidazole-4-carboxamide from 5-amino-1-(5-phospho-D-ribosyl)imidazole-4-carboxamide (10-formyl THF route): step 1/1. The protein operates within purine metabolism; IMP biosynthesis via de novo pathway; IMP from 5-formamido-1-(5-phospho-D-ribosyl)imidazole-4-carboxamide: step 1/1. The sequence is that of Bifunctional purine biosynthesis protein PurH from Thermoanaerobacter sp. (strain X514).